The primary structure comprises 85 residues: Large ribosomal subunit protein bL27 (85 aa).

The segment covering 1–10 (MAQKKGGGST) has biased composition (gly residues). Residues 1–21 (MAQKKGGGSTRNGRDSQPKML) form a disordered region.

The protein belongs to the bacterial ribosomal protein bL27 family.

This Leptothrix cholodnii (strain ATCC 51168 / LMG 8142 / SP-6) (Leptothrix discophora (strain SP-6)) protein is Large ribosomal subunit protein bL27.